The following is a 71-amino-acid chain: MVLENFKWSWISVGVTVGVGVGVCDGDGVGVGIGVGIGVGVSDGVSAGVGVGVAMIIQTSPSACKKYYKLY.

The chain crosses the membrane as a helical span at residues 37–57; the sequence is IGVGVSDGVSAGVGVGVAMII.

It is found in the membrane. This is an uncharacterized protein from Dictyostelium discoideum (Social amoeba).